Reading from the N-terminus, the 328-residue chain is Cell division protein ZipA (328 aa).

The Periplasmic portion of the chain corresponds to 1–4 (MDLN). The helical transmembrane segment at 5-25 (TILIIVGIVALVALIVHGLWS) threads the bilayer. Residues 26-328 (NRREKSKYFD…NAEQAYLARV (303 aa)) lie on the Cytoplasmic side of the membrane. The tract at residues 44–82 (SLTSRSHTQEEMVQPNNISPNTYVENGHTPISQPTTEKL) is disordered. Residues 57 to 81 (QPNNISPNTYVENGHTPISQPTTEK) are compositionally biased toward polar residues.

Belongs to the ZipA family. Interacts with FtsZ via their C-terminal domains.

It is found in the cell inner membrane. Its function is as follows. Essential cell division protein that stabilizes the FtsZ protofilaments by cross-linking them and that serves as a cytoplasmic membrane anchor for the Z ring. Also required for the recruitment to the septal ring of downstream cell division proteins. This is Cell division protein ZipA from Haemophilus influenzae (strain PittGG).